The primary structure comprises 521 residues: GMP synthase [glutamine-hydrolyzing] (521 aa).

In terms of domain architecture, Glutamine amidotransferase type-1 spans 5–197; it reads KILILDFGSQ…VLDICGAQPG (193 aa). Cys-81 acts as the Nucleophile in catalysis. Catalysis depends on residues His-171 and Glu-173. One can recognise a GMPS ATP-PPase domain in the interval 198–390; that stretch reads WTMPNYIEEA…LGLPREMVYR (193 aa). 225-231 lines the ATP pocket; it reads SGGVDSS.

In terms of assembly, homodimer.

It carries out the reaction XMP + L-glutamine + ATP + H2O = GMP + L-glutamate + AMP + diphosphate + 2 H(+). Its pathway is purine metabolism; GMP biosynthesis; GMP from XMP (L-Gln route): step 1/1. Functionally, catalyzes the synthesis of GMP from XMP. The polypeptide is GMP synthase [glutamine-hydrolyzing] (guaA) (Neisseria meningitidis serogroup A / serotype 4A (strain DSM 15465 / Z2491)).